Reading from the N-terminus, the 521-residue chain is Protein DETOXIFICATION 44, chloroplastic (521 aa).

A chloroplast-targeting transit peptide spans 1–31 (MAAVATSFCFSPHRSPSRFGNPNSSIRRTIV). Residues 12–73 (PHRSPSRFGN…DHDHKPDPGI (62 aa)) form a disordered region. Composition is skewed to polar residues over residues 18 to 27 (RFGNPNSSIR) and 42 to 61 (AVSTSSQRPEKQQNPLTSQN). A run of 12 helical transmembrane segments spans residues 80-100 (IMSIALPAALALAADPITSLV), 103-123 (AFVGHIGSAELAAVGVSVSVF), 167-187 (VSTSLVLAAGVGIAEAIALSL), 213-235 (RLRAYGAPPIVVALAAQGAFRGF), 242-262 (LYAVVAGNVLNAVLDPILIFV), 268-288 (SGAAAATVISEYLIAFILLWK), 314-334 (LLIGRTVALLVPFTLATSLAA), 345-365 (QIVLEIWLAVSLLTDALAIAA), 385-405 (LFGVLQVGLATGTGLAAVLFI), 423-443 (IALSGTLFVAGSQPVNALAFV), 454-474 (FGFAAYSMVIVGFISSLFMLV), and 481-503 (LAGIWTGLFLFMALRLVAGAWRL).

It belongs to the multi antimicrobial extrusion (MATE) (TC 2.A.66.1) family. In terms of tissue distribution, expressed in shoots.

It is found in the plastid. The protein resides in the chloroplast membrane. This is Protein DETOXIFICATION 44, chloroplastic from Arabidopsis thaliana (Mouse-ear cress).